A 35-amino-acid polypeptide reads, in one-letter code: Sorbin and SH3 domain-containing protein 1 (35 aa).

The SoHo domain maps to L1–D8. S15 carries the phosphoserine modification. The 14-residue stretch at C22–K35 folds into the SH3 domain.

As to quaternary structure, interacts with the long isoform of AFDN and with VCL. AFDN and VCL bind to SORBS1 in a competitive manner and do not form a ternary complex. Interacts with ABL1, CBL, CBLB and INPPL1/SHIP2 through the third SH3 domain. Interaction with ABL1 occurs only after insulin stimulation while this has no effect on the interaction with INPPL1. Interacts with the insulin receptor but dissociates from it following insulin stimulation. Also interacts with SCA7, PTK2/FAK1 and flotillin. Interacts (via SH3 domain 2) with PXN. Interacts (via third SH3 domain) with the Ten-1 ICD form of TENM1; the interaction induces the translocation of SORBS1 to the nucleus. In terms of processing, O-glycosylated.

The protein localises to the cell junction. It localises to the adherens junction. Its subcellular location is the cell membrane. It is found in the cytoplasm. The protein resides in the cytoskeleton. The protein localises to the focal adhesion. It localises to the nucleus. Its subcellular location is the nucleus matrix. In terms of biological role, plays a role in tyrosine phosphorylation of CBL by linking CBL to the insulin receptor. Required for insulin-stimulated glucose transport. Involved in formation of actin stress fibers and focal adhesions. This Rattus norvegicus (Rat) protein is Sorbin and SH3 domain-containing protein 1.